We begin with the raw amino-acid sequence, 423 residues long: UDP-N-acetylglucosamine 1-carboxyvinyltransferase (423 aa).

Phosphoenolpyruvate is bound at residue 21–22 (KN). UDP-N-acetyl-alpha-D-glucosamine is bound at residue Arg92. Cys116 functions as the Proton donor in the catalytic mechanism. Cys116 is modified (2-(S-cysteinyl)pyruvic acid O-phosphothioketal). UDP-N-acetyl-alpha-D-glucosamine contacts are provided by Asp305 and Val327.

Belongs to the EPSP synthase family. MurA subfamily.

The protein localises to the cytoplasm. The enzyme catalyses phosphoenolpyruvate + UDP-N-acetyl-alpha-D-glucosamine = UDP-N-acetyl-3-O-(1-carboxyvinyl)-alpha-D-glucosamine + phosphate. It functions in the pathway cell wall biogenesis; peptidoglycan biosynthesis. In terms of biological role, cell wall formation. Adds enolpyruvyl to UDP-N-acetylglucosamine. This chain is UDP-N-acetylglucosamine 1-carboxyvinyltransferase, found in Fervidobacterium nodosum (strain ATCC 35602 / DSM 5306 / Rt17-B1).